The sequence spans 350 residues: Ion-translocating oxidoreductase complex subunit D (350 aa).

The next 5 membrane-spanning stretches (helical) occupy residues 20–40, 42–62, 68–88, 89–109, and 123–143; these read IMMLVLIAALPGIATQLWFFG, GTLFQIILAAVSALAAEAAVL, PIAAILKDNSALLTGLLLAVS, IPPLAPWWMVVLGTVFAVIIA, and PAMIGYVVLLISFPVQMTSWL. Residue Thr187 is modified to FMN phosphoryl threonine. 5 helical membrane-spanning segments follow: residues 215–235, 244–264, 267–287, 301–321, and 322–342; these read LAGAGWQWVNIAWLIGGVWLL, IPVSFLVTLAVCSTLGWAFAG, LASPQLHLLSGATMLGAFFIL, LIFGALAGLLVWLIRSFGGYP, and DGVAFAVLLANITVPLIDYYT.

It belongs to the NqrB/RnfD family. In terms of assembly, the complex is composed of six subunits: RnfA, RnfB, RnfC, RnfD, RnfE and RnfG. It depends on FMN as a cofactor.

Its subcellular location is the cell inner membrane. In terms of biological role, part of a membrane-bound complex that couples electron transfer with translocation of ions across the membrane. The polypeptide is Ion-translocating oxidoreductase complex subunit D (Citrobacter koseri (strain ATCC BAA-895 / CDC 4225-83 / SGSC4696)).